The following is a 285-amino-acid chain: MSFTSRLKKDLFIKAQSLVPQHQLSRVVGKVAESENILIKAAVIQAFKTKYGIDLSIAEQADALKYKSFNEFFTRALKEGVRVVDSATGSIVSPADGAISQLGTIHDGEVFQAKGQSFSVEKLIGDPQLAQPFKQGQFATVYLSPRDYHRVHMPFTGTLTETLYIPGELFSVNQVTAENIPGLFARNERMVCLFDTELGRMAVVLVGAMIVAGIETVVTGKVKPTGRLELNHHDVTLQKGDELGRFYLGSTAIILFEKDKMVWDQQFKANSIVVMGEKLGQSTNP.

Residues D96, H152, and S250 each act as charge relay system; for autoendoproteolytic cleavage activity in the active site. Catalysis depends on S250, which acts as the Schiff-base intermediate with substrate; via pyruvic acid; for decarboxylase activity. S250 bears the Pyruvic acid (Ser); by autocatalysis mark.

This sequence belongs to the phosphatidylserine decarboxylase family. PSD-B subfamily. Prokaryotic type I sub-subfamily. As to quaternary structure, heterodimer of a large membrane-associated beta subunit and a small pyruvoyl-containing alpha subunit. The cofactor is pyruvate. In terms of processing, is synthesized initially as an inactive proenzyme. Formation of the active enzyme involves a self-maturation process in which the active site pyruvoyl group is generated from an internal serine residue via an autocatalytic post-translational modification. Two non-identical subunits are generated from the proenzyme in this reaction, and the pyruvate is formed at the N-terminus of the alpha chain, which is derived from the carboxyl end of the proenzyme. The autoendoproteolytic cleavage occurs by a canonical serine protease mechanism, in which the side chain hydroxyl group of the serine supplies its oxygen atom to form the C-terminus of the beta chain, while the remainder of the serine residue undergoes an oxidative deamination to produce ammonia and the pyruvoyl prosthetic group on the alpha chain. During this reaction, the Ser that is part of the protease active site of the proenzyme becomes the pyruvoyl prosthetic group, which constitutes an essential element of the active site of the mature decarboxylase.

Its subcellular location is the cell membrane. The enzyme catalyses a 1,2-diacyl-sn-glycero-3-phospho-L-serine + H(+) = a 1,2-diacyl-sn-glycero-3-phosphoethanolamine + CO2. It functions in the pathway phospholipid metabolism; phosphatidylethanolamine biosynthesis; phosphatidylethanolamine from CDP-diacylglycerol: step 2/2. Catalyzes the formation of phosphatidylethanolamine (PtdEtn) from phosphatidylserine (PtdSer). The protein is Phosphatidylserine decarboxylase proenzyme of Acinetobacter baylyi (strain ATCC 33305 / BD413 / ADP1).